We begin with the raw amino-acid sequence, 833 residues long: MNNAANTGTTNESNVSDAPRIEPLPSLNDDDIEKILQPNDIFTTDRTDASTTSSTAIEDIINPSLDPQSAASPVPSSSFFHDSRKPSTSTHLVRRGTPLGIYQTNLYGHNSRENTNPNSTLLSSKLLAHPPVPYGQNPDLLQHAVYRAQPSSGTTNAQPRQTTRRYQSHKSRPAFVNKLWSMLNDDSNTKLIQWAEDGKSFIVTNREEFVHQILPKYFKHSNFASFVRQLNMYGWHKVQDVKSGSIQSSSDDKWQFENENFIRGREDLLEKIIRQKGSSNNHNSPSGNGNPANGSNIPLDNAAGSNNSNNNISSSNSFFNNGHLLQGKTLRLMNEANLGDKNDVTAILGELEQIKYNQIAISKDLLRINKDNELLWQENMMARERHRTQQQALEKMFRFLTSIVPHLDPKMIMDGLGDPKVNNEKLNSANNIGLNRDNTGTIDELKSNDSFINDDRNSFTNATTNARNNMSPNNDDNSIDTASTNTTNRKKNIDENIKNNNDIINDIIFNTNLANNLSNYNSNNNAGSPIRPYKQRYLLKNRANSSTSSENPSLTPFDIESNNDRKISEIPFDDEEEEETDFRPFTSRDPNNQTSENTFDPNRFTMLSDDDLKKDSHTNDNKHNESDLFWDNVHRNIDEQDARLQNLENMVHILSPGYPNKSFNNKTSSTNTNSNMESAVNVNSPGFNLQDYLTGESNSPNSVHSVPSNGSGSTPLPMPNDNDTEHASTSVNQGENGSGLTPFLTVDDHTLNDNNTSEGSTRVSPDIKFSATENTKVSDNLPSFNDHSYSTQADTAPENAKKRFVEEIPEPAIVEIQDPTEYNDHRLPKRAKK.

Methionine 1 is modified (N-acetylmethionine). Positions methionine 1 to serine 16 are enriched in polar residues. Disordered regions lie at residues methionine 1 to aspartate 31 and asparagine 62 to leucine 92. Low complexity predominate over residues serine 69–phenylalanine 80. A Phosphothreonine modification is found at threonine 97. Positions proline 150–glutamine 161 are enriched in polar residues. Disordered regions lie at residues proline 150–lysine 170 and glycine 277–asparagine 309. The DNA-binding element occupies lysine 170 to glutamate 259. Residues asparagine 260–asparagine 280 form a flexible linker region. Over residues glycine 277–asparagine 296 the composition is skewed to low complexity. An involved in trimerization region spans residues glutamate 350 to isoleucine 403. Positions serine 447–asparagine 457 are enriched in basic and acidic residues. The interval serine 447–isoleucine 493 is disordered. Phosphoserine occurs at positions 450, 458, 471, 478, and 528. Over residues serine 458 to threonine 487 the composition is skewed to polar residues. A compositionally biased stretch (polar residues) spans arginine 542–leucine 554. Disordered stretches follow at residues arginine 542–serine 626, glycine 657–proline 765, and serine 778–asparagine 799. The span at proline 571 to threonine 580 shows a compositional bias: acidic residues. The span at arginine 588 to aspartate 600 shows a compositional bias: polar residues. The span at aspartate 610–serine 626 shows a compositional bias: basic and acidic residues. Over residues asparagine 660 to asparagine 675 the composition is skewed to low complexity. Residues methionine 676–phenylalanine 687 are compositionally biased toward polar residues. Low complexity predominate over residues serine 697 to serine 713. Composition is skewed to polar residues over residues alanine 727–glycine 739, asparagine 752–valine 763, and serine 778–aspartate 794.

Belongs to the HSF family. Homotrimer. Homotrimerization increases the affinity of HSF1 to DNA. Exhibits temperature-dependent phosphorylation that activates the transcriptional capacity.

It localises to the nucleus. Its function is as follows. DNA-binding transcription factor that specifically binds heat shock promoter elements (HSE) and activates transcription. This Saccharomyces cerevisiae (strain ATCC 204508 / S288c) (Baker's yeast) protein is Heat shock transcription factor.